Consider the following 410-residue polypeptide: Phosphoglycerate kinase (410 aa).

Residues 22–24 (DIN), Arg-39, 62–65 (HQSR), Arg-119, and Arg-159 each bind substrate. ATP-binding positions include Glu-332 and 358 to 361 (GGHL).

Belongs to the phosphoglycerate kinase family. Homodimer.

The protein localises to the cytoplasm. The enzyme catalyses (2R)-3-phosphoglycerate + ATP = (2R)-3-phospho-glyceroyl phosphate + ADP. The protein operates within carbohydrate degradation; glycolysis; pyruvate from D-glyceraldehyde 3-phosphate: step 2/5. This Methanothermus fervidus (strain ATCC 43054 / DSM 2088 / JCM 10308 / V24 S) protein is Phosphoglycerate kinase (pgk).